The following is an 854-amino-acid chain: Protein SEY1 homolog (854 aa).

Topologically, residues 1–724 (MAAFSGETAV…LRNIESGKQS (724 aa)) are cytoplasmic. Residues 49–291 (GVNYHVVGVF…NSNFLFSNCS (243 aa)) enclose the GB1/RHD3-type G domain. A GTP-binding site is contributed by 59–66 (GGQSSGKS). Residues 336 to 386 (KHAAIEEFKEVCEEYTKKIQRGDVIPQFTRALEETIERLLKNFSDQTKLYK) are a coiled coil. The helical transmembrane segment at 725-745 (LPPWVLPVMLLLGWNELYYLL) threads the bilayer. Topologically, residues 746–748 (TSP) are lumenal. A helical membrane pass occupies residues 749 to 769 (ILLIAIIVIAVLFFKTFLKSQ). Residues 770 to 854 (LEVLEEKCPV…CRESRDKGED (85 aa)) are Cytoplasmic-facing. Residues 808–854 (GGGGAQFRDPTQATSVSGASAGVSSESSSAASPRRRVCRESRDKGED) form a disordered region. Residues 822–839 (SVSGASAGVSSESSSAAS) show a composition bias toward low complexity. The span at 845 to 854 (CRESRDKGED) shows a compositional bias: basic and acidic residues.

This sequence belongs to the TRAFAC class dynamin-like GTPase superfamily. GB1/RHD3 GTPase family. RHD3 subfamily.

The protein resides in the endoplasmic reticulum membrane. Probable GTP-binding protein that may be involved in cell development. The protein is Protein SEY1 homolog of Trypanosoma brucei brucei (strain 927/4 GUTat10.1).